The sequence spans 194 residues: Protein GrpE (194 aa).

Belongs to the GrpE family. In terms of assembly, homodimer.

The protein resides in the cytoplasm. In terms of biological role, participates actively in the response to hyperosmotic and heat shock by preventing the aggregation of stress-denatured proteins, in association with DnaK and GrpE. It is the nucleotide exchange factor for DnaK and may function as a thermosensor. Unfolded proteins bind initially to DnaJ; upon interaction with the DnaJ-bound protein, DnaK hydrolyzes its bound ATP, resulting in the formation of a stable complex. GrpE releases ADP from DnaK; ATP binding to DnaK triggers the release of the substrate protein, thus completing the reaction cycle. Several rounds of ATP-dependent interactions between DnaJ, DnaK and GrpE are required for fully efficient folding. The polypeptide is Protein GrpE (Aliivibrio fischeri (strain MJ11) (Vibrio fischeri)).